The primary structure comprises 411 residues: MLACIACSTKDGGEGGHRSATATPNSGKSLTSQLKDMVLKFSGSGRHQYKSGGSPSLRTSRFHRSSRLAAYPGIIDESGFTSDGAGEAYTYMRTTTASAGARAAPSTWDLPPKVNHRSFQPRVIRSPSASGVPSIGEEDYDDDDDDDDEETVLLEEDRVPREWTAQVEPGVQITFVSIPGGAGNDLKRIRFSREMFNKWEAQRWWGENYDRVVELYNVQTFSRQQGFSTPTSSVDEAMQRDSFYSRVGSTRESPAMMMPPPPPLPSSGAGREHPISRTASSKAQLSSSSSVAAARPPFYPSTAVPDPSDHVWAHHFNLLNSAAAGPAAPYDPSRGTTSSRDEASVSISNASDLEATEWVEQDEPGVSITIREFGDGTRELRRVRFSRERFGEERAKVWWEQNRDRIHAQYL.

2 disordered regions span residues 10-31 (KDGG…KSLT) and 103-149 (AAPS…DDDE). Residues 20 to 31 (ATATPNSGKSLT) are compositionally biased toward polar residues. Over residues 136 to 149 (GEEDYDDDDDDDDE) the composition is skewed to acidic residues. The 57-residue stretch at 161–217 (REWTAQVEPGVQITFVSIPGGAGNDLKRIRFSREMFNKWEAQRWWGENYDRVVELYN) folds into the BRX 1 domain. 2 disordered regions span residues 245 to 294 (SRVG…VAAA) and 324 to 346 (AGPA…ASVS). A compositionally biased stretch (low complexity) spans 276–294 (SRTASSKAQLSSSSSVAAA). One can recognise a BRX 2 domain in the interval 356–411 (TEWVEQDEPGVSITIREFGDGTRELRRVRFSRERFGEERAKVWWEQNRDRIHAQYL).

This sequence belongs to the BRX family.

The protein localises to the nucleus. This chain is Protein Brevis radix-like 2 (BRXL2), found in Oryza sativa subsp. japonica (Rice).